Reading from the N-terminus, the 155-residue chain is Protein FAM201A (155 aa).

A disordered region spans residues 130 to 155 (QDQGCGQHRPHSPRLVDIALPGGGWT).

In Homo sapiens (Human), this protein is Protein FAM201A (FAM201A).